A 193-amino-acid chain; its full sequence is Bcl-2-binding component 3 (193 aa).

Disordered regions lie at residues 1–31 (MARARQEGSSPEPVEGLARDSPRPFPLGRLM) and 71–131 (ALGG…VEEE). At S10 the chain carries Phosphoserine. A BH3 motif is present at residues 137-151 (IGAQLRRMADDLNAQ).

This sequence belongs to the Bcl-2 family. In terms of assembly, interacts with MCL1 and BCL2A1. Interacts with BCL2 and BCL2L1/BCL-XL. Interacts (via BH3 domain) with NOL3 (via CARD domain); this interaction prevents BBC3 association with BCL2 and results in CASP8 activation.

The protein resides in the mitochondrion. In terms of biological role, essential mediator of p53/TP53-dependent and p53/TP53-independent apoptosis. Promotes partial unfolding of BCL2L1 and dissociation of BCL2L1 from p53/TP53, releasing the bound p53/TP53 to induce apoptosis. Regulates ER stress-induced neuronal apoptosis. The polypeptide is Bcl-2-binding component 3 (Bbc3) (Mus musculus (Mouse)).